The chain runs to 149 residues: Macrodomain Ter protein (149 aa).

It belongs to the MatP family. In terms of assembly, homodimer.

Its subcellular location is the cytoplasm. In terms of biological role, required for spatial organization of the terminus region of the chromosome (Ter macrodomain) during the cell cycle. Prevents early segregation of duplicated Ter macrodomains during cell division. Binds specifically to matS, which is a 13 bp signature motif repeated within the Ter macrodomain. The polypeptide is Macrodomain Ter protein (Vibrio campbellii (strain ATCC BAA-1116)).